The chain runs to 946 residues: DDB1- and CUL4-associated factor 5 (946 aa).

WD repeat units lie at residues 51-91 (GHFG…HSRV), 99-139 (EHHS…LDVF), 140-180 (AHED…HGEP), 185-225 (NYPS…SSLL), 277-317 (FNSC…EAGG), and 331-370 (GHRS…GCTG). The segment at 449–478 (GVSERSGYTDSESSASLPRSPPPTVDESAD) is disordered. Over residues 454–465 (SGYTDSESSASL) the composition is skewed to polar residues. Position 500 is a phosphothreonine (Thr500). Disordered regions lie at residues 527–656 (LSNE…MESV), 675–860 (SNNK…ELET), and 894–946 (CETP…KLKT). Phosphoserine occurs at positions 531 and 533. Residues 531–544 (SDSEENVCEAELDT) are compositionally biased toward acidic residues. Positions 555–567 (PEDGSSSPSSSTS) are enriched in low complexity. The span at 579-592 (ATTRQRNAMRRRQK) shows a compositional bias: basic residues. Residues 625 to 638 (LSPSPDSSPERSAS) are compositionally biased toward low complexity. A phosphoserine mark is found at Ser626, Ser628, and Ser645. Residues 691–701 (EGRAGTSHKDN) are compositionally biased toward basic and acidic residues. Polar residues-rich tracts occupy residues 760–769 (GTSQDTNNSG) and 808–819 (TLNSASGNCPRT).

As to quaternary structure, interacts with DDB1, CUL4A or CUL4B. Interacts with L3MBTL3. Interacts with SOX2. Interacts with DNMT1. Interacts with E2F1.

It functions in the pathway protein modification; protein ubiquitination. Is a substrate receptor for the CUL4-DDB1 E3 ubiquitin-protein ligase complex (CRL4), involved in the ubiquitination of a set of methylated non-histone proteins, including SOX2. The complex CRL4-DCAF5 is also involved in the ubiquitination of methylated DNMT1 and E2F1. The protein is DDB1- and CUL4-associated factor 5 (Dcaf5) of Mus musculus (Mouse).